Reading from the N-terminus, the 370-residue chain is 2-oxoisovalerate dehydrogenase subunit beta, mitochondrial (370 aa).

The transit peptide at 1–25 (MLRGNNIKKVNSLLVRSFHSTVGNR) directs the protein to the mitochondrion. Position 130 (Y130) interacts with thiamine diphosphate. The K(+) site is built by G156, L158, T159, and E209.

As to quaternary structure, heterotetramer of 2 alpha and 2 beta chains. The cofactor is thiamine diphosphate.

It is found in the mitochondrion matrix. The catalysed reaction is N(6)-[(R)-lipoyl]-L-lysyl-[protein] + 3-methyl-2-oxobutanoate + H(+) = N(6)-[(R)-S(8)-2-methylpropanoyldihydrolipoyl]-L-lysyl-[protein] + CO2. In terms of biological role, the branched-chain alpha-keto dehydrogenase complex catalyzes the overall conversion of alpha-keto acids to acyl-CoA and CO(2). It contains multiple copies of three enzymatic components: branched-chain alpha-keto acid decarboxylase (E1), lipoamide acyltransferase (E2) and lipoamide dehydrogenase (E3). This chain is 2-oxoisovalerate dehydrogenase subunit beta, mitochondrial (bkdB), found in Dictyostelium discoideum (Social amoeba).